The sequence spans 68 residues: MPKHEFSVDMTCEGCAEAVSRVLNKLGGVEFNIDLPNKKVCIDSEHSSDTLLATLNKTGKAVSYLGPK.

An HMA domain is found at 1 to 63 (MPKHEFSVDM…TLNKTGKAVS (63 aa)). Positions 12 and 15 each coordinate Cu cation. Position 47 is a phosphoserine (serine 47). An N6-acetyllysine modification is found at lysine 60.

This sequence belongs to the ATX1 family. In terms of assembly, homodimer. Interacts with ATP7B. Interacts with ATP7A. Interacts (via dimer form) with SLC31A1 (via C-terminal domain); this interaction improves ATOX1 stability and controls intracellular Cu(I) levels.

In terms of biological role, binds and deliver cytosolic copper to the copper ATPase proteins. May be important in cellular antioxidant defense. This Mus musculus (Mouse) protein is Copper transport protein ATOX1.